A 2067-amino-acid chain; its full sequence is Negative regulator of mitosis (2067 aa).

Residues 100–118 (SLAIPQTTSQQSNRPSGSE) are compositionally biased toward polar residues. Disordered regions lie at residues 100–132 (SLAIPQTTSQQSNRPSGSESLDGKESRRSSTSK), 332–408 (ESIP…DDFA), and 452–480 (GSQSSTIHPGGLRQSIGAGSTRGSFGFNP). The Nuclear localization signal signature appears at 336 to 347 (SHRKKKRRDTGG). The segment covering 336–355 (SHRKKKRRDTGGTRSKRRSS) has biased composition (basic residues). Residues 384 to 396 (WNASVMSHSQYST) show a composition bias toward polar residues. PC repeat units lie at residues 1434–1465 (AGIMGIGLLYCNSQHRRMSEVMLSEIENADQE), 1482–1520 (AAGFALGFINLGKGKDLKGMRDMHIVERLLAVAVGTKNV), 1532–1562 (GATIALAIIFMKTNDETLAQKVDIPDTTVRF), and 1625–1659 (GLCFALGLRFAGSPDPTVRDILLSYLDQFIRISRL). The segment at 2020–2042 (FPSESDEEKRDRQETGSMPSSGH) is disordered.

Belongs to the APC1 family.

Functionally, negative regulator of mitosis in E.nidulans. This protein is part of a regulatory pathway that includes the nimA protein kinase. It is required to prevent premature entry into mitosis. Mutations to this protein both cause cells to enter mitosis and prevent them from leaving mitosis. The sequence is that of Negative regulator of mitosis (bimE) from Emericella nidulans (strain FGSC A4 / ATCC 38163 / CBS 112.46 / NRRL 194 / M139) (Aspergillus nidulans).